Here is a 449-residue protein sequence, read N- to C-terminus: Heterogeneous nuclear ribonucleoprotein H (449 aa).

The residue at position 1 (M1) is an N-acetylmethionine. M2 is modified (N-acetylmethionine; in Heterogeneous nuclear ribonucleoprotein H, N-terminally processed). The RRM 1 domain maps to 11 to 90 (FVVKVRGLPW…RYVEVFKSNN (80 aa)). S23 carries the post-translational modification Phosphoserine. Residue K35 forms a Glycyl lysine isopeptide (Lys-Gly) (interchain with G-Cter in SUMO2) linkage. 2 positions are modified to phosphoserine: S54 and S63. Glycyl lysine isopeptide (Lys-Gly) (interchain with G-Cter in SUMO2) cross-links involve residues K87 and K98. An RRM 2 domain is found at 111 to 188 (GFVRLRGLPF…RYIEIFKSSR (78 aa)). Position 233 is a dimethylated arginine; alternate (R233). Position 233 is an omega-N-methylarginine; alternate (R233). One copy of the 1-1 repeat lies at 234-249 (GAYGGGYGGYDDYNGY). The tract at residues 234-433 (GAYGGGYGGY…YGGQSSMSGY (200 aa)) is 2 X 16 AA Gly-rich approximate repeats. A Phosphotyrosine modification is found at Y246. One can recognise an RRM 3 domain in the interval 289–364 (HCVHMRGLPY…RYVELFLNST (76 aa)). Position 310 is a phosphoserine (S310). 3 consecutive repeat copies span residues 354–372 (HRYVELFLNSTAGASGGAY), 374–392 (HRYVELFLNSTAGASGGAY), and 418–433 (GGYGGGYGGQSSMSGY). The interval 354–392 (HRYVELFLNSTAGASGGAYEHRYVELFLNSTAGASGGAY) is 2 X 19 AA perfect repeats.

In terms of assembly, part of a ternary complex containing FUBP2, PTBP1, PTBP2 and HNRNPH1. Identified in the spliceosome C complex. Interacts with IGF2BP1. Interacts with CUGBP1; the interaction is RNA-dependent. Interacts with MBNL1; the interaction in RNA-independent.

The protein localises to the nucleus. It localises to the nucleoplasm. This protein is a component of the heterogeneous nuclear ribonucleoprotein (hnRNP) complexes which provide the substrate for the processing events that pre-mRNAs undergo before becoming functional, translatable mRNAs in the cytoplasm. Mediates pre-mRNA alternative splicing regulation. Inhibits, together with CUGBP1, insulin receptor (IR) pre-mRNA exon 11 inclusion in myoblast. Binds to the IR RNA. Binds poly(RG). The sequence is that of Heterogeneous nuclear ribonucleoprotein H (Hnrnph1) from Mus musculus (Mouse).